Here is a 143-residue protein sequence, read N- to C-terminus: Transcriptional regulator MraZ (143 aa).

SpoVT-AbrB domains follow at residues 5 to 47 (TFTP…PKAE) and 76 to 119 (ADEQ…DAES).

Belongs to the MraZ family. As to quaternary structure, forms oligomers.

The protein resides in the cytoplasm. Its subcellular location is the nucleoid. The polypeptide is Transcriptional regulator MraZ (Corynebacterium jeikeium (strain K411)).